The primary structure comprises 285 residues: Putative cytochrome c peroxidase, mitochondrial (285 aa).

Catalysis depends on histidine 37, which acts as the Proton acceptor. Histidine 161 is a heme b binding site. Tryptophan 177 serves as the catalytic Tryptophan radical intermediate.

It belongs to the peroxidase family. Cytochrome c peroxidase subfamily. As to quaternary structure, forms a one-to-one complex with cytochrome c. It depends on heme b as a cofactor.

The protein localises to the mitochondrion matrix. It localises to the mitochondrion intermembrane space. The enzyme catalyses 2 Fe(II)-[cytochrome c] + H2O2 + 2 H(+) = 2 Fe(III)-[cytochrome c] + 2 H2O. In terms of biological role, destroys radicals which are normally produced within the cells and which are toxic to biological systems. This is Putative cytochrome c peroxidase, mitochondrial from Yarrowia lipolytica (strain CLIB 122 / E 150) (Yeast).